A 149-amino-acid chain; its full sequence is UPF0178 protein lwe1471 (149 aa).

Belongs to the UPF0178 family.

This is UPF0178 protein lwe1471 from Listeria welshimeri serovar 6b (strain ATCC 35897 / DSM 20650 / CCUG 15529 / CIP 8149 / NCTC 11857 / SLCC 5334 / V8).